The chain runs to 299 residues: Regucalcin (299 aa).

An a divalent metal cation-binding site is contributed by E18. The substrate site is built by R101, N103, and E121. Positions 154 and 204 each coordinate a divalent metal cation. D204 functions as the Proton donor/acceptor in the catalytic mechanism. An N6-succinyllysine mark is found at K244 and K253.

The protein belongs to the SMP-30/CGR1 family. Monomer. Zn(2+) serves as cofactor. It depends on Mn(2+) as a cofactor. Ca(2+) is required as a cofactor. The cofactor is Mg(2+).

It localises to the cytoplasm. The enzyme catalyses D-glucono-1,5-lactone + H2O = D-gluconate + H(+). It functions in the pathway cofactor biosynthesis; L-ascorbate biosynthesis via UDP-alpha-D-glucuronate pathway; L-ascorbate from UDP-alpha-D-glucuronate: step 3/4. Gluconolactonase with low activity towards other sugar lactones, including gulonolactone and galactonolactone. Catalyzes a key step in ascorbic acid (vitamin C) biosynthesis. Can also hydrolyze diisopropyl phosphorofluoridate and phenylacetate (in vitro). Calcium-binding protein. Modulates Ca(2+) signaling, and Ca(2+)-dependent cellular processes and enzyme activities. This chain is Regucalcin (RGN), found in Sus scrofa (Pig).